Consider the following 458-residue polypeptide: Ribosomal protein uS12 methylthiotransferase RimO (458 aa).

Positions 26 to 136 constitute an MTTase N-terminal domain; it reads PRIGMVSLGC…VLDAVHGAVP (111 aa). Residues C35, C71, C100, C167, C171, and C174 each coordinate [4Fe-4S] cluster. Residues 153 to 389 enclose the Radical SAM core domain; sequence LTPRHYAYLK…MEKAQAISEA (237 aa). The TRAM domain maps to 392–458; sequence QAKVGRTMQV…SEYDLWGKLT (67 aa).

The protein belongs to the methylthiotransferase family. RimO subfamily. [4Fe-4S] cluster serves as cofactor.

Its subcellular location is the cytoplasm. The enzyme catalyses L-aspartate(89)-[ribosomal protein uS12]-hydrogen + (sulfur carrier)-SH + AH2 + 2 S-adenosyl-L-methionine = 3-methylsulfanyl-L-aspartate(89)-[ribosomal protein uS12]-hydrogen + (sulfur carrier)-H + 5'-deoxyadenosine + L-methionine + A + S-adenosyl-L-homocysteine + 2 H(+). Functionally, catalyzes the methylthiolation of an aspartic acid residue of ribosomal protein uS12. The polypeptide is Ribosomal protein uS12 methylthiotransferase RimO (Jannaschia sp. (strain CCS1)).